Reading from the N-terminus, the 1088-residue chain is Insulin receptor substrate 1-B (1088 aa).

The region spanning 15–117 is the PH domain; it reads DVRKVGYLRK…WYQALVDLHN (103 aa). Phosphotyrosine is present on Tyr-48. In terms of domain architecture, IRS-type PTB spans 155 to 259; sequence FKEVWQVIMK…EAMKALSDEF (105 aa). Residues 259 to 428 form a disordered region; that stretch reads FRPRSKSQSS…GGFISSDEYG (170 aa). Composition is skewed to low complexity over residues 264–278, 302–312, 379–400, and 408–420; these read KSQS…ISVP, SATATSPAGGA, SPSA…GSTS, and SSAS…SDGG. A Phosphoserine modification is found at Ser-307. Tyr-460 bears the Phosphotyrosine; by INSR mark. Residues 460 to 463 carry the YXXM motif 1 motif; that stretch reads YICM. Polar residues-rich tracts occupy residues 466-479 and 499-516; these read SSSH…QRYQ and SSGT…PSQS. Disordered regions lie at residues 466–485 and 496–516; these read SSSH…RGEE and RTHS…PSQS. 5 consecutive short sequence motifs (YXXM motif) follow at residues 521–524, 567–570, 584–587, 612–615, and 654–657; these read YTEM, YMPM, YMMM, and YINM. Residues Tyr-567 and Tyr-584 each carry the phosphotyrosine; by INSR modification. The residue at position 612 (Tyr-612) is a Phosphotyrosine. Positions 704 to 785 are disordered; sequence NLRISANSGH…PPEPKSPGEY (82 aa). Positions 707–718 are enriched in polar residues; the sequence is ISANSGHNLYTE. The span at 719–729 shows a compositional bias: low complexity; that stretch reads DSSSSSTSSDS. Phosphotyrosine; by INSR occurs at positions 785 and 823. The tract at residues 785–787 is GRB2-binding; it reads YVN. Positions 823–826 match the YXXM motif 7 motif; sequence YMNM. The span at 840 to 863 shows a compositional bias: polar residues; that stretch reads TSSYEPPNKPVNSVCPTETCSSSR. The disordered stretch occupies residues 840 to 868; that stretch reads TSSYEPPNKPVNSVCPTETCSSSRPPIRG. Tyr-875 is modified (phosphotyrosine; by INSR). Short sequence motifs (YXXM motif) lie at residues 875-878 and 909-912; these read YMSM and YAEM. Residues 935–1006 are disordered; the sequence is ASRSSLLGQG…SGEDVKRHSS (72 aa). Polar residues-rich tracts occupy residues 946–961 and 980–995; these read GPSA…NRNP and ETFS…TTGP. Residues Tyr-1037 and Tyr-1069 each carry the phosphotyrosine; by INSR modification.

In terms of assembly, interacts with the NPXY motif of tyrosine-phosphorylated igf1r and insr via the PTB domain. Binds to phosphatidylinositol 3-kinase p85 subunit at a low level in vitro prior to phosphorylation. Binding is greatly enhanced following tyrosine phosphorylation by insr and probably occurs via the phosphorylated YXXM motifs. In terms of processing, phosphorylation of Tyr-785 is required for grb2-binding.

Functionally, may mediate the control of various cellular processes by insulin. When phosphorylated by the insulin receptor binds specifically to various cellular proteins containing SH2 domains such as phosphatidylinositol 3-kinase p85 subunit or grb2. Activates phosphatidylinositol 3-kinase when bound to the regulatory p85 subunit. This is Insulin receptor substrate 1-B (irs1-b) from Xenopus laevis (African clawed frog).